Here is a 382-residue protein sequence, read N- to C-terminus: MTDQRPLTIALVAGETSGDILGAGLIRALKERVPNARFVGVAGPRMQAEGCEAWYEMEELAVMGIVEVLGRLRRLLHIRADLTKRFGELKPDVFVGIDAPDFNITLEGNLKKQGIKTIHYVSPSVWAWRQKRVFKIGRATDLVLAFLPFEKAFYDKYNVPCRFIGHTMADAMPLDPDKNGARDVLGIPYDAHCLALLPGSRGAEVEMLSADFLKTAQLLRQTYPDLEIVVPLVNAKRREQFERIKAEVAPDLSVHLLDGMGREAMVASDAALLASGTAALECMLAKCPMVVGYRMKPFTFWLAKRLVKTDYVSLPNLLAGRELVKELLQEECEPQKLAAALLPLLANGKTSHAMHDTFRELHQQIRCNADEQAAQAVLELAQ.

Belongs to the LpxB family.

The catalysed reaction is 2-N,3-O-bis[(3R)-3-hydroxytetradecanoyl]-alpha-D-glucosaminyl 1-phosphate + UDP-2-N,3-O-bis[(3R)-3-hydroxytetradecanoyl]-alpha-D-glucosamine = lipid A disaccharide (E. coli) + UDP + H(+). The enzyme catalyses a lipid X + a UDP-2-N,3-O-bis[(3R)-3-hydroxyacyl]-alpha-D-glucosamine = a lipid A disaccharide + UDP + H(+). It functions in the pathway glycolipid biosynthesis; lipid IV(A) biosynthesis; lipid IV(A) from (3R)-3-hydroxytetradecanoyl-[acyl-carrier-protein] and UDP-N-acetyl-alpha-D-glucosamine: step 5/6. Condensation of UDP-2,3-diacylglucosamine and 2,3-diacylglucosamine-1-phosphate to form lipid A disaccharide, a precursor of lipid A, a phosphorylated glycolipid that anchors the lipopolysaccharide to the outer membrane of the cell. The sequence is that of Lipid-A-disaccharide synthase from Shigella flexneri.